The sequence spans 24 residues: 29 kDa outer membrane protein (24 aa).

It localises to the cell outer membrane. In terms of biological role, may be involved in transporting molecules across the outer membrane. This is 29 kDa outer membrane protein from Acinetobacter baumannii.